An 81-amino-acid polypeptide reads, in one-letter code: Large ribosomal subunit protein bL27 (81 aa).

A disordered region spans residues 1-22 (MAHKKGQGSSRNGRDSNAQRRG).

This sequence belongs to the bacterial ribosomal protein bL27 family.

This Rhodopirellula baltica (strain DSM 10527 / NCIMB 13988 / SH1) protein is Large ribosomal subunit protein bL27.